A 465-amino-acid polypeptide reads, in one-letter code: ATP-dependent protease ATPase subunit HslU (465 aa).

ATP contacts are provided by residues Val19 and 61 to 66 (GVGKTE). The disordered stretch occupies residues 153–175 (LFQSDGSDGDDETTEQDSHDEIR). 3 residues coordinate ATP: Asp279, Glu343, and Arg415.

The protein belongs to the ClpX chaperone family. HslU subfamily. A double ring-shaped homohexamer of HslV is capped on each side by a ring-shaped HslU homohexamer. The assembly of the HslU/HslV complex is dependent on binding of ATP.

The protein resides in the cytoplasm. Its function is as follows. ATPase subunit of a proteasome-like degradation complex; this subunit has chaperone activity. The binding of ATP and its subsequent hydrolysis by HslU are essential for unfolding of protein substrates subsequently hydrolyzed by HslV. HslU recognizes the N-terminal part of its protein substrates and unfolds these before they are guided to HslV for hydrolysis. The protein is ATP-dependent protease ATPase subunit HslU of Oceanobacillus iheyensis (strain DSM 14371 / CIP 107618 / JCM 11309 / KCTC 3954 / HTE831).